A 200-amino-acid chain; its full sequence is Dual specificity tyrosine-phosphorylation-regulated kinase 1A (200 aa).

Tyr-41 bears the Phosphotyrosine; by autocatalysis mark. Lys-58 contacts ATP. Tyr-76 carries the post-translational modification Phosphotyrosine; by autocatalysis. Residue Ser-88 is modified to Phosphoserine; by autocatalysis. Phosphothreonine; by autocatalysis is present on Thr-122.

This sequence belongs to the protein kinase superfamily. CMGC Ser/Thr protein kinase family. MNB/DYRK subfamily. As to quaternary structure, interacts with RAD54L2/ARIP4. Interacts with CRY2. Interacts with RANBP9. Interacts with WDR68. Interacts with SIRT1. Post-translationally, can also autophosphorylate on serine and threonine residues (in vitro). Autophosphorylated on numerous tyrosine residues.

The protein localises to the nucleus. It catalyses the reaction L-tyrosyl-[protein] + ATP = O-phospho-L-tyrosyl-[protein] + ADP + H(+). It carries out the reaction L-seryl-[protein] + ATP = O-phospho-L-seryl-[protein] + ADP + H(+). The catalysed reaction is L-threonyl-[protein] + ATP = O-phospho-L-threonyl-[protein] + ADP + H(+). The enzyme catalyses [DNA-directed RNA polymerase] + ATP = phospho-[DNA-directed RNA polymerase] + ADP + H(+). Its activity is regulated as follows. Inhibited by RANBP9. Functionally, dual-specificity kinase which possesses both serine/threonine and tyrosine kinase activities. Exhibits a substrate preference for proline at position P+1 and arginine at position P-3. Plays an important role in double-strand breaks (DSBs) repair following DNA damage. Mechanistically, phosphorylates RNF169 and increases its ability to block accumulation of TP53BP1 at the DSB sites thereby promoting homologous recombination repair (HRR). Also acts as a positive regulator of transcription by acting as a CTD kinase that mediates phosphorylation of the CTD (C-terminal domain) of the large subunit of RNA polymerase II (RNAP II) POLR2A. May play a role in a signaling pathway regulating nuclear functions of cell proliferation. Modulates alternative splicing by phosphorylating the splice factor SRSF6. Has pro-survival function and negatively regulates the apoptotic process. Promotes cell survival upon genotoxic stress through phosphorylation of SIRT1. This in turn inhibits p53/TP53 activity and apoptosis. Phosphorylates SEPTIN4, SEPTIN5 and SF3B1 at 'Thr-434'. This chain is Dual specificity tyrosine-phosphorylation-regulated kinase 1A, found in Oryctolagus cuniculus (Rabbit).